Consider the following 282-residue polypeptide: 2-dehydro-3-deoxyphosphooctonate aldolase (282 aa).

It belongs to the KdsA family.

It localises to the cytoplasm. The catalysed reaction is D-arabinose 5-phosphate + phosphoenolpyruvate + H2O = 3-deoxy-alpha-D-manno-2-octulosonate-8-phosphate + phosphate. It participates in carbohydrate biosynthesis; 3-deoxy-D-manno-octulosonate biosynthesis; 3-deoxy-D-manno-octulosonate from D-ribulose 5-phosphate: step 2/3. It functions in the pathway bacterial outer membrane biogenesis; lipopolysaccharide biosynthesis. In Shewanella pealeana (strain ATCC 700345 / ANG-SQ1), this protein is 2-dehydro-3-deoxyphosphooctonate aldolase.